The sequence spans 557 residues: Formate--tetrahydrofolate ligase 2 (557 aa).

66-73 (TPAGEGKT) serves as a coordination point for ATP.

It belongs to the formate--tetrahydrofolate ligase family.

The catalysed reaction is (6S)-5,6,7,8-tetrahydrofolate + formate + ATP = (6R)-10-formyltetrahydrofolate + ADP + phosphate. It participates in one-carbon metabolism; tetrahydrofolate interconversion. The protein is Formate--tetrahydrofolate ligase 2 of Streptococcus pyogenes serotype M18 (strain MGAS8232).